The sequence spans 145 residues: Ribonuclease P protein component (145 aa).

Low complexity predominate over residues 120–130 (LPAAPGTMPPA). Residues 120-145 (LPAAPGTMPPARTMHPSSLSPTEPDL) are disordered. A compositionally biased stretch (polar residues) spans 134–145 (HPSSLSPTEPDL).

The protein belongs to the RnpA family. As to quaternary structure, consists of a catalytic RNA component (M1 or rnpB) and a protein subunit.

The catalysed reaction is Endonucleolytic cleavage of RNA, removing 5'-extranucleotides from tRNA precursor.. Functionally, RNaseP catalyzes the removal of the 5'-leader sequence from pre-tRNA to produce the mature 5'-terminus. It can also cleave other RNA substrates such as 4.5S RNA. The protein component plays an auxiliary but essential role in vivo by binding to the 5'-leader sequence and broadening the substrate specificity of the ribozyme. In Xanthomonas oryzae pv. oryzae (strain MAFF 311018), this protein is Ribonuclease P protein component.